Reading from the N-terminus, the 95-residue chain is Co-chaperonin GroES (95 aa).

Belongs to the GroES chaperonin family. In terms of assembly, heptamer of 7 subunits arranged in a ring. Interacts with the chaperonin GroEL.

It localises to the cytoplasm. In terms of biological role, together with the chaperonin GroEL, plays an essential role in assisting protein folding. The GroEL-GroES system forms a nano-cage that allows encapsulation of the non-native substrate proteins and provides a physical environment optimized to promote and accelerate protein folding. GroES binds to the apical surface of the GroEL ring, thereby capping the opening of the GroEL channel. The sequence is that of Co-chaperonin GroES from Clostridium botulinum (strain ATCC 19397 / Type A).